The primary structure comprises 213 residues: Adenylate kinase (213 aa).

10 to 15 (GAGKGT) is a binding site for ATP. Positions 30–59 (STGNLLRDEVKSKTDLGVDIEKLISNGKFV) are NMP. AMP is bound by residues T31, R36, 57-59 (KFV), 85-88 (GYPR), and Q92. The LID stretch occupies residues 126–162 (GRMTCEKCNMTLNEYFNKEQIELHPCGVEHLKKRKDD). R127 serves as a coordination point for ATP. 2 residues coordinate AMP: R159 and R170. G198 lines the ATP pocket.

This sequence belongs to the adenylate kinase family. Monomer.

The protein resides in the cytoplasm. The enzyme catalyses AMP + ATP = 2 ADP. The protein operates within purine metabolism; AMP biosynthesis via salvage pathway; AMP from ADP: step 1/1. Its function is as follows. Catalyzes the reversible transfer of the terminal phosphate group between ATP and AMP. Plays an important role in cellular energy homeostasis and in adenine nucleotide metabolism. This chain is Adenylate kinase, found in Pelagibacter ubique (strain HTCC1062).